The chain runs to 274 residues: Thiamine kinase (274 aa).

Belongs to the thiamine kinase family.

The enzyme catalyses thiamine + ATP = thiamine phosphate + ADP + H(+). The protein operates within cofactor biosynthesis; thiamine diphosphate biosynthesis; thiamine phosphate from thiamine: step 1/1. Its function is as follows. Catalyzes the ATP-dependent phosphorylation of thiamine to thiamine phosphate. Is involved in thiamine salvage. This Escherichia coli O81 (strain ED1a) protein is Thiamine kinase.